Reading from the N-terminus, the 234-residue chain is Phosphoribosylaminoimidazole-succinocarboxamide synthase (234 aa).

This sequence belongs to the SAICAR synthetase family.

The catalysed reaction is 5-amino-1-(5-phospho-D-ribosyl)imidazole-4-carboxylate + L-aspartate + ATP = (2S)-2-[5-amino-1-(5-phospho-beta-D-ribosyl)imidazole-4-carboxamido]succinate + ADP + phosphate + 2 H(+). It functions in the pathway purine metabolism; IMP biosynthesis via de novo pathway; 5-amino-1-(5-phospho-D-ribosyl)imidazole-4-carboxamide from 5-amino-1-(5-phospho-D-ribosyl)imidazole-4-carboxylate: step 1/2. This chain is Phosphoribosylaminoimidazole-succinocarboxamide synthase, found in Clostridium botulinum (strain ATCC 19397 / Type A).